The chain runs to 200 residues: Ribonuclease HII (200 aa).

The region spanning 9–198 (ALIAGVDEVG…VQRVLAQAKG (190 aa)) is the RNase H type-2 domain. Aspartate 15, glutamate 16, and aspartate 107 together coordinate a divalent metal cation.

This sequence belongs to the RNase HII family. The cofactor is Mn(2+). It depends on Mg(2+) as a cofactor.

The protein resides in the cytoplasm. It carries out the reaction Endonucleolytic cleavage to 5'-phosphomonoester.. In terms of biological role, endonuclease that specifically degrades the RNA of RNA-DNA hybrids. This chain is Ribonuclease HII, found in Pseudoalteromonas translucida (strain TAC 125).